Consider the following 336-residue polypeptide: Glutamyl endopeptidase (336 aa).

The first 29 residues, 1–29, serve as a signal peptide directing secretion; sequence MKGKFLKVSSLFVATLTTATLVSSPAANA. A propeptide spanning residues 30–68 is cleaved from the precursor; the sequence is LSSKAMDNHPQQTQSSKQQTPKIQKGGNLKPLEQREHAN. Residues 34 to 61 form a disordered region; sequence AMDNHPQQTQSSKQQTPKIQKGGNLKPL. Over residues 39-51 the composition is skewed to low complexity; it reads PQQTQSSKQQTPK. Active-site charge relay system residues include H119, D161, and S237. The segment at 283 to 336 is disordered; it reads FANDDQPNNPDNPDNPNNPDNPNNPDEPNNPDNPNNPDNPDNGDNNNSDNPDAA. Over residues 286–336 the composition is skewed to low complexity; sequence DDQPNNPDNPDNPNNPDNPNNPDEPNNPDNPNNPDNPDNGDNNNSDNPDAA. A run of 11 repeats spans residues 289–291, 292–294, 295–297, 298–300, 301–303, 304–306, 310–312, 313–315, 316–318, 319–321, and 322–324. Residues 289 to 324 form an 11 X 3 AA repeats of P-[DN]-N region; the sequence is PNNPDNPDNPNNPDNPNNPDEPNNPDNPNNPDNPDN.

Belongs to the peptidase S1B family. In terms of processing, proteolytically cleaved by aureolysin (aur). This cleavage leads to the activation of SspA.

The protein resides in the secreted. The enzyme catalyses Preferential cleavage: Glu-|-Xaa, Asp-|-Xaa.. Preferentially cleaves peptide bonds on the carboxyl-terminal side of aspartate and glutamate. Along with other extracellular proteases it is involved in colonization and infection of human tissues. Required for proteolytic maturation of thiol protease SspB and inactivation of SspC, an inhibitor of SspB. It is the most important protease for degradation of fibronectin-binding protein (FnBP) and surface protein A, which are involved in adherence to host cells. May also protect bacteria against host defense mechanism by cleaving the immunoglobulin classes IgG, IgA and IgM. May be involved in the stability of secreted lipases. The protein is Glutamyl endopeptidase (sspA) of Staphylococcus aureus (strain NCTC 8325 / PS 47).